Consider the following 290-residue polypeptide: Ribosomal RNA small subunit methyltransferase A (290 aa).

6 residues coordinate S-adenosyl-L-methionine: Asn27, Leu29, Gly54, Glu75, Asp100, and Asn125.

Belongs to the class I-like SAM-binding methyltransferase superfamily. rRNA adenine N(6)-methyltransferase family. RsmA subfamily.

The protein localises to the cytoplasm. It catalyses the reaction adenosine(1518)/adenosine(1519) in 16S rRNA + 4 S-adenosyl-L-methionine = N(6)-dimethyladenosine(1518)/N(6)-dimethyladenosine(1519) in 16S rRNA + 4 S-adenosyl-L-homocysteine + 4 H(+). Functionally, specifically dimethylates two adjacent adenosines (A1518 and A1519) in the loop of a conserved hairpin near the 3'-end of 16S rRNA in the 30S particle. May play a critical role in biogenesis of 30S subunits. This is Ribosomal RNA small subunit methyltransferase A from Streptococcus agalactiae serotype Ia (strain ATCC 27591 / A909 / CDC SS700).